We begin with the raw amino-acid sequence, 299 residues long: Sulfate adenylyltransferase subunit 2 (299 aa).

It belongs to the PAPS reductase family. CysD subfamily. As to quaternary structure, sulfate-activating enzymes, NodP and NodQ, may be physically associated.

The catalysed reaction is sulfate + ATP + H(+) = adenosine 5'-phosphosulfate + diphosphate. Its function is as follows. Proposed to provide activated sulfate for transfer to nod factor. In Rhizobium sp. (strain BR816), this protein is Sulfate adenylyltransferase subunit 2 (nodP).